The sequence spans 172 residues: Large ribosomal subunit protein uL10 (172 aa).

The protein belongs to the universal ribosomal protein uL10 family. Part of the ribosomal stalk of the 50S ribosomal subunit. The N-terminus interacts with L11 and the large rRNA to form the base of the stalk. The C-terminus forms an elongated spine to which L12 dimers bind in a sequential fashion forming a multimeric L10(L12)X complex.

Its function is as follows. Forms part of the ribosomal stalk, playing a central role in the interaction of the ribosome with GTP-bound translation factors. The protein is Large ribosomal subunit protein uL10 of Brucella suis biovar 1 (strain 1330).